The primary structure comprises 1774 residues: Protein TIC 214 (1774 aa).

Transmembrane regions (helical) follow at residues Ile19–Gly39, Phe68–Leu88, Pro91–His111, Val133–Leu153, Val176–Ile196, and Ile227–Ile247. Residues Gly254–Gln268 are compositionally biased toward basic and acidic residues. The disordered stretch occupies residues Gly254–Ala275.

This sequence belongs to the TIC214 family. As to quaternary structure, part of the Tic complex.

The protein resides in the plastid. The protein localises to the chloroplast inner membrane. Its function is as follows. Involved in protein precursor import into chloroplasts. May be part of an intermediate translocation complex acting as a protein-conducting channel at the inner envelope. The protein is Protein TIC 214 of Aethionema cordifolium (Lebanon stonecress).